Here is a 583-residue protein sequence, read N- to C-terminus: Radixin (583 aa).

One can recognise an FERM domain in the interval 5-295; the sequence is INVRVTTMDA…GNHELYMRRR (291 aa). 60-63 is a binding site for a 1,2-diacyl-sn-glycero-3-phospho-(1D-myo-inositol); it reads KLNK. Position 83 is an N6-succinyllysine (Lys-83). An a 1,2-diacyl-sn-glycero-3-phospho-(1D-myo-inositol)-binding site is contributed by Lys-278. Disordered stretches follow at residues 310–330, 376–407, and 462–526; these read REEKHQKQLERAQLENEKKKR, DQERKRAKEEAERLEKERRAAEEAKSAIAKQA, and ELKT…RVKK. Residues 376–400 are compositionally biased toward basic and acidic residues; it reads DQERKRAKEEAERLEKERRAAEEAK. Residues 469–480 are compositionally biased toward pro residues; sequence APPPPPPPPVIP. 2 stretches are compositionally biased toward basic and acidic residues: residues 483–492 and 506–525; these read ENEHDEHDEN and MNHRSEEERVTETQKNERVK. Phosphothreonine; by ROCK2 is present on Thr-564.

In terms of assembly, binds NHERF1. Interacts with NHERF1, NHERF2, LAYN, MME/NEP and ICAM2. Interacts with CPNE1 (via VWFA domain) and CPNE4 (via VWFA domain). Interacts (via FERM domain) with SPN/CD43 cytoplasmic tail. Interacts with CD44. Interacts with CLIC5; may work together in a complex which also includes EZR and MYO6 to stabilize linkages between the plasma membrane and subjacent actin cytoskeleton at the base of stereocilia. Post-translationally, phosphorylated by tyrosine-protein kinases. Phosphorylation by ROCK2 suppresses the head-to-tail association of the N-terminal and C-terminal halves resulting in an opened conformation which is capable of actin and membrane-binding.

The protein resides in the cell membrane. It is found in the cytoplasm. It localises to the cytoskeleton. The protein localises to the cleavage furrow. Its subcellular location is the cell projection. The protein resides in the microvillus. It is found in the stereocilium. With respect to regulation, a head-to-tail association, of the N-terminal and C-terminal halves results in a closed conformation (inactive form) which is incapable of actin or membrane-binding. Its function is as follows. Probably plays a crucial role in the binding of the barbed end of actin filaments to the plasma membrane. This Homo sapiens (Human) protein is Radixin (RDX).